Here is a 374-residue protein sequence, read N- to C-terminus: DNA-directed RNA polymerase subunit alpha (374 aa).

An alpha N-terminal domain (alpha-NTD) region spans residues 1-270 (MIFDEDSSSV…DQFQQFINFD (270 aa)). The segment at 282–374 (KDVLPYDSNL…ESLSKQYSEE (93 aa)) is alpha C-terminal domain (alpha-CTD).

Belongs to the RNA polymerase alpha chain family. Homodimer. The RNAP catalytic core consists of 2 alpha, 1 beta, 1 beta' and 1 omega subunit. When a sigma factor is associated with the core the holoenzyme is formed, which can initiate transcription.

It carries out the reaction RNA(n) + a ribonucleoside 5'-triphosphate = RNA(n+1) + diphosphate. In terms of biological role, DNA-dependent RNA polymerase catalyzes the transcription of DNA into RNA using the four ribonucleoside triphosphates as substrates. The sequence is that of DNA-directed RNA polymerase subunit alpha from Ehrlichia ruminantium (strain Welgevonden).